Here is a 115-residue protein sequence, read N- to C-terminus: Insulin (115 aa).

Positions 1–22 (MAALWLQSVSLLVLMLVSWSGS) are cleaved as a signal peptide. Disulfide bonds link Cys32–Cys101, Cys44–Cys114, and Cys100–Cys105. Residues 56–92 (DVDPLLGFLPAKSGGAAAGGENEVAEFAFKDQMEMMV) constitute a propeptide, c peptide.

The protein belongs to the insulin family. In terms of assembly, heterodimer of a B chain and an A chain linked by two disulfide bonds.

It localises to the secreted. Its function is as follows. Insulin decreases blood glucose concentration. It increases cell permeability to monosaccharides, amino acids and fatty acids. It accelerates glycolysis, the pentose phosphate cycle, and glycogen synthesis in liver. This is Insulin (ins) from Verasper moseri (Barfin flounder).